A 562-amino-acid polypeptide reads, in one-letter code: Membrane protein insertase YidC (562 aa).

A helical membrane pass occupies residues 4-24 (QRIFLFLALSILGLLLWTSWE). The segment at 33–71 (TEEVVEAEDDVPAPAETPDEAPDPADGETPARDRAEVED) is disordered. Residues 35 to 58 (EVVEAEDDVPAPAETPDEAPDPAD) are compositionally biased toward acidic residues. Residues 61-71 (TPARDRAEVED) show a composition bias toward basic and acidic residues. 4 consecutive transmembrane segments (helical) span residues 330–350 (MTLS…FWLL), 356–376 (IVGN…LAFY), 426–446 (LGGC…YWVL), and 499–519 (IMMA…AGLV).

It belongs to the OXA1/ALB3/YidC family. Type 1 subfamily. Interacts with the Sec translocase complex via SecD. Specifically interacts with transmembrane segments of nascent integral membrane proteins during membrane integration.

It localises to the cell inner membrane. Its function is as follows. Required for the insertion and/or proper folding and/or complex formation of integral membrane proteins into the membrane. Involved in integration of membrane proteins that insert both dependently and independently of the Sec translocase complex, as well as at least some lipoproteins. Aids folding of multispanning membrane proteins. The chain is Membrane protein insertase YidC from Alkalilimnicola ehrlichii (strain ATCC BAA-1101 / DSM 17681 / MLHE-1).